A 143-amino-acid polypeptide reads, in one-letter code: Large ribosomal subunit protein uL11 (143 aa).

The protein belongs to the universal ribosomal protein uL11 family. As to quaternary structure, part of the ribosomal stalk of the 50S ribosomal subunit. Interacts with L10 and the large rRNA to form the base of the stalk. L10 forms an elongated spine to which L12 dimers bind in a sequential fashion forming a multimeric L10(L12)X complex. In terms of processing, one or more lysine residues are methylated.

In terms of biological role, forms part of the ribosomal stalk which helps the ribosome interact with GTP-bound translation factors. This is Large ribosomal subunit protein uL11 from Nitrosospira multiformis (strain ATCC 25196 / NCIMB 11849 / C 71).